Consider the following 344-residue polypeptide: Trace amine-associated receptor 8b (344 aa).

Residues 1-31 lie on the Extracellular side of the membrane; sequence MTSNFSQPALQLCYENTNGSCIKTPYSPGPR. 2 N-linked (GlcNAc...) asparagine glycosylation sites follow: Asn4 and Asn18. Intrachain disulfides connect Cys21–Cys185 and Cys104–Cys189. The chain crosses the membrane as a helical span at residues 32–52; that stretch reads VILYMVFGFGAVLAVCGNLLV. Over 53 to 67 the chain is Cytoplasmic; the sequence is VISVLHFKQLHSPAN. Residues 68 to 88 traverse the membrane as a helical segment; the sequence is FLIASLASADFLVGISVMPFS. Topologically, residues 89–111 are extracellular; it reads MVRSIESCWYFGDAFCSLHSCCD. Residues 112–132 form a helical membrane-spanning segment; the sequence is VAFCYSSALHLCFISVDRYIA. Topologically, residues 133-146 are cytoplasmic; the sequence is VTDPLVYPTKFTVS. Residues 147-167 form a helical membrane-spanning segment; that stretch reads VSGICISISWILPLVYSSAVF. The Extracellular portion of the chain corresponds to 168 to 195; that stretch reads YTGISAKGIESLVSALNCVGGCQIVVNQ. Residues 196 to 216 form a helical membrane-spanning segment; the sequence is DWVLIDFLLFFIPTLVMIILY. Over 217 to 260 the chain is Cytoplasmic; that stretch reads SKIFLVAKQQAVKIETSVSDNRGESSSESHKARVAKRERKAAKT. The helical transmembrane segment at 261–281 threads the bilayer; the sequence is LGVTVVAFMVSWLPYTIDSLV. A topological domain (extracellular) is located at residue Asp282. A helical membrane pass occupies residues 283–303; the sequence is AFVGFITPAYVYEICCWSAYY. Over 304 to 344 the chain is Cytoplasmic; that stretch reads NSAMNPLIYAFFYPWFRKAIKLILSGEILKSHSSTMSLFSE.

The protein belongs to the G-protein coupled receptor 1 family. In terms of tissue distribution, specifically expressed in neurons of the olfactory epithelium.

The protein resides in the cell membrane. Olfactory receptor specific for trace amines. Trace amine compounds are enriched in animal body fluids and act on trace amine-associated receptors (TAARs) to elicit both intraspecific and interspecific innate behaviors. Ligand-binding causes a conformation change that triggers signaling via G alpha proteins, possibly G(i)/G(o) G alpha proteins. This is Trace amine-associated receptor 8b from Mus musculus (Mouse).